The sequence spans 538 residues: Inositol-3-phosphate synthase (538 aa).

NAD(+)-binding residues include glycine 74, glycine 75, asparagine 76, asparagine 77, aspartate 150, serine 186, valine 187, glutamine 197, aspartate 198, arginine 200, threonine 247, alanine 248, asparagine 249, threonine 250, glycine 298, serine 299, aspartate 323, serine 326, asparagine 357, asparagine 358, aspartate 359, lysine 372, glycine 412, aspartate 413, aspartate 441, and serine 442.

Belongs to the myo-inositol 1-phosphate synthase family. Homotetramer. NAD(+) serves as cofactor.

Its subcellular location is the cytoplasm. It carries out the reaction D-glucose 6-phosphate = 1D-myo-inositol 3-phosphate. It participates in polyol metabolism; myo-inositol biosynthesis; myo-inositol from D-glucose 6-phosphate: step 1/2. Its function is as follows. Key enzyme in myo-inositol biosynthesis pathway that catalyzes the conversion of glucose 6-phosphate to 1-myo-inositol 1-phosphate in a NAD-dependent manner. Rate-limiting enzyme in the synthesis of all inositol-containing compounds. In Candida glabrata (strain ATCC 2001 / BCRC 20586 / JCM 3761 / NBRC 0622 / NRRL Y-65 / CBS 138) (Yeast), this protein is Inositol-3-phosphate synthase (INO1).